An 80-amino-acid polypeptide reads, in one-letter code: Protein KorB (80 aa).

2 DNA-binding regions (H-T-H motif) span residues Ala13–Asp32 and Asn56–Glu75.

Functionally, repressor for the transcription of certain pIJ101 promoters, including those the from kilA and kilB loci. In Streptomyces lividans, this protein is Protein KorB (korB).